A 183-amino-acid polypeptide reads, in one-letter code: Secreted RxLR effector protein 41 (183 aa).

A signal peptide spans 1–18 (MLGFVTGVLAISAHVIVS). The RxLR-dEER motif lies at 41–65 (RRLRSYETDTASARAEEGTSDIEER). N-linked (GlcNAc...) asparagine glycosylation is present at Asn88.

The protein belongs to the RxLR effector family.

The protein resides in the secreted. Its subcellular location is the host nucleus. It localises to the host cytoplasm. Functionally, secreted effector that dos not suppress the host cell death induced by cell death-inducing proteins. The protein is Secreted RxLR effector protein 41 of Plasmopara viticola (Downy mildew of grapevine).